The primary structure comprises 199 residues: Large ribosomal subunit protein bL25 (199 aa).

This sequence belongs to the bacterial ribosomal protein bL25 family. CTC subfamily. Part of the 50S ribosomal subunit; part of the 5S rRNA/L5/L18/L25 subcomplex. Contacts the 5S rRNA. Binds to the 5S rRNA independently of L5 and L18.

In terms of biological role, this is one of the proteins that binds to the 5S RNA in the ribosome where it forms part of the central protuberance. This chain is Large ribosomal subunit protein bL25, found in Nostoc punctiforme (strain ATCC 29133 / PCC 73102).